Reading from the N-terminus, the 298-residue chain is uncharacterized protein (298 aa).

An ABC transporter domain is found at L2 to S229. G34–T41 contributes to the ATP binding site.

Belongs to the ABC transporter superfamily.

It localises to the cell membrane. This is an uncharacterized protein from Bacillus subtilis (strain 168).